We begin with the raw amino-acid sequence, 285 residues long: MNENEKKLLSDIECLPNVDCKCDFGDIVRAFADYKINDELKFKVRQIALNLRPWRKGPFEILETFIDSEWQSFMKFNLLKPFMDLQGKKVADIGCNNGYYLFRMSNLGAKKLIGFDPGVRTFLQFRFLEHFLKSGVIYELLGVENLPDYGEKFDSIFCLGVLYHRSDPVRALKELKSSLNSGGEVFLDTMFIDGDDEICLFPRLSYAKISNIYFLPTIRTLQNWCERAKFKDFEILAVKATDENEQRKTDWIYGQSLGDFLDPFDKTRTIEGYPAPKRVYVRVKI.

Carboxy-S-adenosyl-L-methionine contacts are provided by residues Lys56, Trp70, Lys75, Gly94, 143-144 (VE), Tyr163, and Arg278.

Belongs to the class I-like SAM-binding methyltransferase superfamily. CmoB family. In terms of assembly, homotetramer.

The enzyme catalyses carboxy-S-adenosyl-L-methionine + 5-hydroxyuridine(34) in tRNA = 5-carboxymethoxyuridine(34) in tRNA + S-adenosyl-L-homocysteine + H(+). Its function is as follows. Catalyzes carboxymethyl transfer from carboxy-S-adenosyl-L-methionine (Cx-SAM) to 5-hydroxyuridine (ho5U) to form 5-carboxymethoxyuridine (cmo5U) at position 34 in tRNAs. This chain is tRNA U34 carboxymethyltransferase, found in Campylobacter hominis (strain ATCC BAA-381 / DSM 21671 / CCUG 45161 / LMG 19568 / NCTC 13146 / CH001A).